We begin with the raw amino-acid sequence, 199 residues long: Protein MM_0484 (199 aa).

Residues 5–196 (TEGRAAVKLA…EKEPDGEVIE (192 aa)) enclose the AMMECR1 domain.

The sequence is that of Protein MM_0484 from Methanosarcina mazei (strain ATCC BAA-159 / DSM 3647 / Goe1 / Go1 / JCM 11833 / OCM 88) (Methanosarcina frisia).